Reading from the N-terminus, the 130-residue chain is Small ribosomal subunit protein uS8 (130 aa).

This sequence belongs to the universal ribosomal protein uS8 family.

It is found in the cytoplasm. The sequence is that of Small ribosomal subunit protein uS8 (RPS15A) from Brassica napus (Rape).